The following is a 227-amino-acid chain: 3,4-dihydroxy-2-butanone 4-phosphate synthase (227 aa).

D-ribulose 5-phosphate-binding positions include 45-46 (RE), aspartate 50, 158-162 (RRGHT), and glutamate 182. Glutamate 46 is a binding site for Mg(2+). Mg(2+) is bound at residue histidine 161.

The protein belongs to the DHBP synthase family. Homodimer. It depends on Mg(2+) as a cofactor. Requires Mn(2+) as cofactor.

The enzyme catalyses D-ribulose 5-phosphate = (2S)-2-hydroxy-3-oxobutyl phosphate + formate + H(+). It functions in the pathway cofactor biosynthesis; riboflavin biosynthesis; 2-hydroxy-3-oxobutyl phosphate from D-ribulose 5-phosphate: step 1/1. Functionally, catalyzes the conversion of D-ribulose 5-phosphate to formate and 3,4-dihydroxy-2-butanone 4-phosphate. This chain is 3,4-dihydroxy-2-butanone 4-phosphate synthase, found in Ralstonia nicotianae (strain ATCC BAA-1114 / GMI1000) (Ralstonia solanacearum).